The primary structure comprises 345 residues: GTP 3',8-cyclase (345 aa).

In terms of domain architecture, Radical SAM core spans Ser10–Asp236. Arg19 is a GTP binding site. The [4Fe-4S] cluster site is built by Cys26 and Cys30. S-adenosyl-L-methionine is bound at residue Tyr32. A [4Fe-4S] cluster-binding site is contributed by Cys33. Arg65 contributes to the GTP binding site. Gly69 contributes to the S-adenosyl-L-methionine binding site. Thr98 contributes to the GTP binding site. Position 123 (Ser123) interacts with S-adenosyl-L-methionine. Residue Lys172 participates in GTP binding. Position 206 (Met206) interacts with S-adenosyl-L-methionine. [4Fe-4S] cluster is bound by residues Cys269 and Cys272. Position 274–276 (Arg274–Arg276) interacts with GTP. Cys286 provides a ligand contact to [4Fe-4S] cluster.

The protein belongs to the radical SAM superfamily. MoaA family. As to quaternary structure, monomer and homodimer. Requires [4Fe-4S] cluster as cofactor.

The catalysed reaction is GTP + AH2 + S-adenosyl-L-methionine = (8S)-3',8-cyclo-7,8-dihydroguanosine 5'-triphosphate + 5'-deoxyadenosine + L-methionine + A + H(+). It functions in the pathway cofactor biosynthesis; molybdopterin biosynthesis. Catalyzes the cyclization of GTP to (8S)-3',8-cyclo-7,8-dihydroguanosine 5'-triphosphate. The polypeptide is GTP 3',8-cyclase (Synechococcus sp. (strain CC9902)).